The following is a 198-amino-acid chain: FMN-dependent NADH:quinone oxidoreductase (198 aa).

FMN contacts are provided by residues Ser-10, Ser-16–Ser-18, Met-94–Phe-97, and Thr-138–Gly-141.

It belongs to the azoreductase type 1 family. In terms of assembly, homodimer. It depends on FMN as a cofactor.

The enzyme catalyses 2 a quinone + NADH + H(+) = 2 a 1,4-benzosemiquinone + NAD(+). It carries out the reaction N,N-dimethyl-1,4-phenylenediamine + anthranilate + 2 NAD(+) = 2-(4-dimethylaminophenyl)diazenylbenzoate + 2 NADH + 2 H(+). Quinone reductase that provides resistance to thiol-specific stress caused by electrophilic quinones. Its function is as follows. Also exhibits azoreductase activity. Catalyzes the reductive cleavage of the azo bond in aromatic azo compounds to the corresponding amines. The protein is FMN-dependent NADH:quinone oxidoreductase of Shewanella sp. (strain MR-4).